The primary structure comprises 95 residues: High mobility group nucleosome-binding domain-containing protein 3 (95 aa).

3 stretches are compositionally biased toward basic and acidic residues: residues 1 to 25 (MPKRKSPENAEGKDGAKLTKQEPTR), 39 to 53 (PEPKPRKTSAKKEPG), and 62 to 72 (GKKEEKQEAGK). The disordered stretch occupies residues 1 to 95 (MPKRKSPENA…EEVLSTNASH (95 aa)). At Ser6 the chain carries Phosphoserine. Ser78 carries the post-translational modification Phosphoserine.

Belongs to the HMGN family. Interacts with the ligand binding domain of the thyroid receptor (TR) (in vitro). Requires the presence of thyroid hormone for its interaction. Interacts with transcriptional regulator SEHBP. Interacts with nucleosomes.

The protein resides in the nucleus. Binds to nucleosomes, regulating chromatin structure and consequently, chromatin-dependent processes such as transcription, DNA replication and DNA repair. Affects both insulin and glucagon levels and modulates the expression of pancreatic genes involved in insulin secretion. Regulates the expression of the glucose transporter SLC2A2 by binding specifically to its promoter region and recruiting PDX1 and additional transcription factors. Regulates the expression of SLC6A9, a glycine transporter which regulates the glycine concentration in synaptic junctions in the central nervous system, by binding to its transcription start site. May play a role in ocular development and astrocyte function. This Rattus norvegicus (Rat) protein is High mobility group nucleosome-binding domain-containing protein 3 (Hmgn3).